A 26-amino-acid polypeptide reads, in one-letter code: Metallothionein (26 aa).

Residues 1 to 14 (MGDCGCSGASSCNC) are compositionally biased toward low complexity. The interval 1–26 (MGDCGCSGASSCNCGSGCSCSNCGSK) is disordered. The Cu(+) site is built by Cys-4, Cys-6, Cys-12, Cys-14, Cys-18, Cys-20, and Cys-23. Over residues 15–26 (GSGCSCSNCGSK) the composition is skewed to cys residues.

This sequence belongs to the metallothionein superfamily. Type 8 family.

This Neurospora crassa (strain ATCC 24698 / 74-OR23-1A / CBS 708.71 / DSM 1257 / FGSC 987) protein is Metallothionein (cmt).